The sequence spans 893 residues: Zinc finger protein 281 (893 aa).

4 disordered regions span residues 1 to 113 (MKIG…FPSQ), 126 to 148 (IKQE…HHHY), 153 to 172 (AGAE…SHGV), and 198 to 251 (SGSR…GAVL). Residue K2 forms a Glycyl lysine isopeptide (Lys-Gly) (interchain with G-Cter in SUMO2) linkage. A compositionally biased stretch (gly residues) spans 7–36 (FLSGGGGPSSSGGSGSGGSSGSASGGSGGG). Residues K100 and K127 each participate in a glycyl lysine isopeptide (Lys-Gly) (interchain with G-Cter in SUMO2) cross-link. Residues 127–139 (KQEKPADPEEQPS) show a composition bias toward basic and acidic residues. Residues 161-170 (GLGGGEGGSH) are compositionally biased toward gly residues. The segment covering 201–216 (RTDEHGNQEPKQDANV) has biased composition (basic and acidic residues). Residues K211, K217, K223, K230, K240, and K256 each participate in a glycyl lysine isopeptide (Lys-Gly) (interchain with G-Cter in SUMO2) cross-link. 3 consecutive C2H2-type zinc fingers follow at residues 258–280 (HICD…VLIH), 286–308 (FQCS…EKIH), and 314–336 (FGCD…KRTH). Residues K298 and K322 each participate in a glycyl lysine isopeptide (Lys-Gly) (interchain with G-Cter in SUMO2) cross-link. The C2H2-type 4; atypical zinc-finger motif lies at 342–364 (YKCDTCQQYFSRTDRLLKHRRTC). K370 participates in a covalent cross-link: Glycyl lysine isopeptide (Lys-Gly) (interchain with G-Cter in SUMO2). The segment at 371–425 (GAASAEPGSSNHNSMGNLAVLSQGNTSSSRRKSKSKSIAIENKEHKTGKTNESQM) is disordered. The segment covering 377–396 (PGSSNHNSMGNLAVLSQGNT) has biased composition (polar residues). Phosphoserine is present on S392. Glycyl lysine isopeptide (Lys-Gly) (interchain with G-Cter in SUMO2) cross-links involve residues K406, K413, K457, and K474. Phosphoserine is present on S481. Residues K490, K495, K536, K596, K614, and K619 each participate in a glycyl lysine isopeptide (Lys-Gly) (interchain with G-Cter in SUMO2) cross-link. The segment at 613-658 (GKSETQKEDPFNLTEPRVDLHTSGEHSELVQEENLSPGTQTPSNDK) is disordered. Positions 616 to 641 (ETQKEDPFNLTEPRVDLHTSGEHSEL) are enriched in basic and acidic residues. Over residues 645–658 (ENLSPGTQTPSNDK) the composition is skewed to polar residues. S648 carries the post-translational modification Phosphoserine. Residues K658 and K667 each participate in a glycyl lysine isopeptide (Lys-Gly) (interchain with G-Cter in SUMO2) cross-link. A compositionally biased stretch (polar residues) spans 775–813 (SSAFQSSSQKLTSQKEQQKNLESSTSFQIPSQELASQID). Positions 775–815 (SSAFQSSSQKLTSQKEQQKNLESSTSFQIPSQELASQIDPQ) are disordered. Residue S782 is modified to Phosphoserine. Glycyl lysine isopeptide (Lys-Gly) (interchain with G-Cter in SUMO2) cross-links involve residues K784, K789, and K793. S805 carries the post-translational modification Phosphoserine. Residues K816 and K838 each participate in a glycyl lysine isopeptide (Lys-Gly) (interchain with G-Cter in SUMO2) cross-link. A Phosphothreonine modification is found at T886.

The protein belongs to the krueppel C2H2-type zinc-finger protein family. As to quaternary structure, interacts with NANOG. Associates with the NuRD complex.

The protein resides in the nucleus. Its function is as follows. Transcription repressor that plays a role in regulation of embryonic stem cells (ESCs) differentiation. Required for ESCs differentiation and acts by mediating autorepression of NANOG in ESCs: binds to the NANOG promoter and promotes association of NANOG protein to its own promoter and recruits the NuRD complex, which deacetylates histones. Not required for establishement and maintenance of ESCs. Represses the transcription of a number of genes including GAST, ODC1 and VIM. Binds to the G-rich box in the enhancer region of these genes. The protein is Zinc finger protein 281 (Znf281) of Mus musculus (Mouse).